A 727-amino-acid polypeptide reads, in one-letter code: MLRIPVRKALVGLSKSPKGCVRTTATAASNLIEVFVDGQSVMVEPGTTVLQACEKVGMQIPRFCYHERLSVAGNCRMCLVEIEKAPKVVAACAMPVMKGWNILTNSEKSKKAREGVMELLLANHPLDCPICDQGGECDLQDQSMMFGNDRSRFLEGKRAVEDKNIGPLVKTIMTRCIQCTRCIRFASEIAGVDDLGTTGRGNDMQVGTYIEKMFMSELSGNIIDICPVGALTSKPYAFTARPWETRKTESIDVMDAVGSNIVVSTRTGEVMRILPRMHEDINEEWISDKTRFAYDGLKRQRLTEPMVRNEKGLLTYTSWEDALSRVAGMLQSFQGKDVAAIAGGLVDAEALVALKDLLNRVDSDTLCTEEVFPTAGAGTDLRSNYLLNTTIAGVEEADVVLLVGTNPRFEAPLFNARIRKSWLHNDLKVALIGSPVDLTYTYDHLGDSPKILQDIASGSHPFSQVLKEAKKPMVVLGSSALQRNDGAAILAAFSSIAQKIRMTSGVTGDWKVMNILHRIASQVAALDLGYKPGVEAIRKNPPRLLFLLGADGGCITRQDLPKDCFIIYQGHHGDVGAPIADVILPGAAYTEKSATYVNTEGRAQQTKVAVTPPGLAREDWKIIRALSEIAGVTLPYDTLDQVRNRLEEVSPNLVRYDDIEGANYFQQANELSKLVNQQLLADPLVPPQLTIKDFYMTDSISRASQTMAKCVKAVTEGAQAVEEPSIC.

The N-terminal 23 residues, 1–23 (MLRIPVRKALVGLSKSPKGCVRT), are a transit peptide targeting the mitochondrion. One can recognise a 2Fe-2S ferredoxin-type domain in the interval 30–108 (NLIEVFVDGQ…GWNILTNSEK (79 aa)). Positions 64, 75, and 78 each coordinate [2Fe-2S] cluster. K84 bears the N6-acetyllysine mark. C92 contacts [2Fe-2S] cluster. One can recognise a 4Fe-4S His(Cys)3-ligated-type domain in the interval 108–147 (KSKKAREGVMELLLANHPLDCPICDQGGECDLQDQSMMFG). 8 residues coordinate [4Fe-4S] cluster: H124, C128, C131, C137, C176, C179, C182, and C226. One can recognise a 4Fe-4S Mo/W bis-MGD-type domain in the interval 245–301 (TRKTESIDVMDAVGSNIVVSTRTGEVMRILPRMHEDINEEWISDKTRFAYDGLKRQR). N6-acetyllysine is present on residues K467, K499, and K709.

It belongs to the complex I 75 kDa subunit family. As to quaternary structure, core subunit of respiratory chain NADH dehydrogenase (Complex I) which is composed of 45 different subunits. This is the largest subunit of complex I and it is a component of the iron-sulfur (IP) fragment of the enzyme. Complex I associates with ubiquinol-cytochrome reductase complex (Complex III) to form supercomplexes. Interacts with MDM2 and AKAP1. [2Fe-2S] cluster serves as cofactor. Requires [4Fe-4S] cluster as cofactor.

The protein resides in the mitochondrion inner membrane. The enzyme catalyses a ubiquinone + NADH + 5 H(+)(in) = a ubiquinol + NAD(+) + 4 H(+)(out). Its function is as follows. Core subunit of the mitochondrial membrane respiratory chain NADH dehydrogenase (Complex I) which catalyzes electron transfer from NADH through the respiratory chain, using ubiquinone as an electron acceptor. Essential for catalysing the entry and efficient transfer of electrons within complex I. Plays a key role in the assembly and stability of complex I and participates in the association of complex I with ubiquinol-cytochrome reductase complex (Complex III) to form supercomplexes. In Pongo abelii (Sumatran orangutan), this protein is NADH-ubiquinone oxidoreductase 75 kDa subunit, mitochondrial (NDUFS1).